The sequence spans 367 residues: C-glycoside deglycosidase alpha subunit (367 aa).

A Mg(2+)-binding site is contributed by Glu146. The Proton acceptor role is filled by His148. 3 residues coordinate Mg(2+): Asp178, His276, and Glu312.

This sequence belongs to the C-glycoside deglycosidase alpha subunit family. As to quaternary structure, heterodimer composed of an alpha subunit (CarB1) and a beta subunit (CarC1). Mg(2+) serves as cofactor.

The enzyme catalyses 3''-dehydroisovitexin = 1,5-anhydro-D-erythro-hex-1-en-3-ulose + apigenin. With respect to regulation, activity is strongly reduced in the presence of chelating agents. In terms of biological role, carbon-carbon bond-cleaving enzyme which participates in the metabolism of C-glycosides. Acts on the C6-glycosylated compound 3''-dehydroisovitexin (3''-oxo-isovitexin). Shows weak activity with 3''-dehydroisoorientin (3''-oxo-homoorientin) and 3'-dehydromangiferin (3'-oxo-mangiferin). The sequence is that of C-glycoside deglycosidase alpha subunit from Arthrobacter globiformis (strain ATCC 8010 / DSM 20124 / JCM 1332 / NBRC 12137 / NCIMB 8907 / NRRL B-2979 / 168).